The following is a 493-amino-acid chain: ATP-dependent RNA helicase dbp3 (493 aa).

Residues 1 to 38 are disordered; that stretch reads MTKRDYQNDTTAESRPTKKSKGEKKVKETKEKKEKKVK. The span at 23–34 shows a compositional bias: basic and acidic residues; that stretch reads EKKVKETKEKKE. Residues 97–105 carry the Q motif motif; that stretch reads SFKSPTSIQ. Residues 109-285 enclose the Helicase ATP-binding domain; that stretch reads WPLLFGGRDV…STFMSSPVTV (177 aa). 122–129 is a binding site for ATP; the sequence is AETGSGKT. A DEAD box motif is present at residues 232–235; the sequence is DEAD. The region spanning 316–462 is the Helicase C-terminal domain; sequence RLVQLLKQHQ…EVPEELLKFG (147 aa).

This sequence belongs to the DEAD box helicase family. DDX5/DBP2 subfamily.

Its subcellular location is the nucleus. The protein resides in the nucleolus. The enzyme catalyses ATP + H2O = ADP + phosphate + H(+). Its function is as follows. ATP-dependent RNA helicase required for 60S ribosomal subunit synthesis. Involved in efficient pre-rRNA processing, predominantly at site A3, which is necessary for the normal formation of 25S and 5.8S rRNAs. The protein is ATP-dependent RNA helicase dbp3 (dbp3) of Aspergillus terreus (strain NIH 2624 / FGSC A1156).